The sequence spans 640 residues: Threonine--tRNA ligase (640 aa).

In terms of domain architecture, TGS spans 1 to 61 (MPIITLPNGD…TEDSTLQIIT (61 aa)). The tract at residues 242 to 533 (DHRKIGKALD…LIEHYAGFMP (292 aa)) is catalytic. Cys-333, His-384, and His-510 together coordinate Zn(2+).

Belongs to the class-II aminoacyl-tRNA synthetase family. Homodimer. Requires Zn(2+) as cofactor.

It localises to the cytoplasm. It carries out the reaction tRNA(Thr) + L-threonine + ATP = L-threonyl-tRNA(Thr) + AMP + diphosphate + H(+). Functionally, catalyzes the attachment of threonine to tRNA(Thr) in a two-step reaction: L-threonine is first activated by ATP to form Thr-AMP and then transferred to the acceptor end of tRNA(Thr). Also edits incorrectly charged L-seryl-tRNA(Thr). The sequence is that of Threonine--tRNA ligase from Acinetobacter baumannii (strain AB307-0294).